The following is an 86-amino-acid chain: Gas vesicle protein A1 (86 aa).

Belongs to the gas vesicle GvpA family. The gas vesicle shell is 2 nm thick and consists of a single layer of this protein. It forms helical ribs nearly perpendicular to the long axis of the vesicle.

It localises to the gas vesicle shell. Functionally, gas vesicles are hollow, gas filled proteinaceous nanostructures found in some microorganisms. During planktonic growth they allow positioning of the organism at a favorable depth for light or nutrient acquisition. GvpA forms the protein shell. It is not clear if the 2 type A proteins in this organism are functionally redundant. Its function is as follows. When the full gvp locus (gvpA1-gvpP-gvpQ-gvpA2-gvpR-gvpN-gvpF-gvpG-gvpL-gvpS-gvpK-gvpJ-gvpT-gvpU, called pNL26) is expressed in E.coli gas vesicles are made. This chain is Gas vesicle protein A1, found in Priestia megaterium (Bacillus megaterium).